A 794-amino-acid chain; its full sequence is Protein argonaute-4 (794 aa).

The PAZ domain occupies 152-271 (PIIEFMCEVL…LPLEVCNIVA (120 aa)). One can recognise a Piwi domain in the interval 442 to 753 (LIVVILPGKT…VAFRARYHLV (312 aa)). Residues 758–779 (DSAEGSHVSGQSNGRDPQALAK) form a disordered region.

The protein belongs to the argonaute family. Ago subfamily.

It localises to the cytoplasm. The protein localises to the P-body. Functionally, required for RNA-mediated gene silencing (RNAi). Binds to short RNAs such as microRNAs (miRNAs) and represses the translation of mRNAs which are complementary to them. Lacks endonuclease activity and does not appear to cleave target mRNAs. This Gallus gallus (Chicken) protein is Protein argonaute-4 (AGO4).